Consider the following 604-residue polypeptide: Lipoprotein LpqB (604 aa).

A signal peptide spans 1 to 27 (MTMRAARLSGSTGLTAALVAVLLVLTG). Cys28 carries the N-palmitoyl cysteine lipid modification. Cys28 carries S-diacylglycerol cysteine lipidation. The segment at 35–60 (SAPQALGTIDREPTSEGPTPPIAGRD) is disordered.

Belongs to the LpqB lipoprotein family.

Its subcellular location is the cell membrane. The sequence is that of Lipoprotein LpqB from Nocardia farcinica (strain IFM 10152).